The primary structure comprises 380 residues: Ceramide synthase 2 (380 aa).

At 1–40 (MLQTLYDYFWWERLWLPVNLTWADLEDRDGRVYAKASDLY) the chain is on the lumenal side. N19 carries an N-linked (GlcNAc...) asparagine glycan. A helical transmembrane segment spans residues 41–61 (ITLPLALLFLIVRYFFELYVA). Residues 67–128 (LLNIKEKTRL…RRRRNQDRPS (62 aa)) are homeobox-like. Positions 131–332 (KKFREASWRF…ILRMAHKFIT (202 aa)) constitute a TLC domain. 4 consecutive transmembrane segments (helical) span residues 140 to 160 (FTFY…KPWF), 181 to 201 (WYYM…ASDV), 209 to 229 (QIIH…ANYI), and 264 to 284 (IFIV…PFWI). A Last loop motif motif is present at residues 291 to 300 (YPLELYPAFF). The chain crosses the membrane as a helical span at residues 304–324 (FFNSMMGVLQLLHIFWAYLIL). The Cytoplasmic segment spans residues 325–380 (RMAHKFITGKLVEDERSDREETESSEGEEAAAGGGAKSRPLANGHPILNNNHRKND). Residues 338–380 (DERSDREETESSEGEEAAAGGGAKSRPLANGHPILNNNHRKND) form a disordered region. S341 is modified (phosphoserine). The segment covering 344 to 353 (EETESSEGEE) has biased composition (acidic residues). The residue at position 346 (T346) is a Phosphothreonine. Phosphoserine is present on residues S348 and S349.

In terms of assembly, interacts with ATP6V0C, ASGR1, ASGR2 and SLC22A1/OCT1. Interacts with ELOV1, HSD17B12 and TECR. Interacts with NDUFS2. Interacts with PAQR4; the interaction regulates the stability and activity of CERS2 and is inhibited in presence of ceramides. In terms of processing, acetylated. Deacetylation by SIRT3 increases enzyme activity and promotes mitochondrial ceramide accumulation. Phosphorylated at the C-terminus by CK2, leading to increase the ceramide synthase activity. As to expression, expressed in kidney, liver, brain, heart, placenta and lung.

The protein resides in the endoplasmic reticulum membrane. The catalysed reaction is a very long-chain fatty acyl-CoA + a sphingoid base = an N-(very-long-chain fatty acyl)-sphingoid base + CoA + H(+). It carries out the reaction docosanoyl-CoA + sphinganine = N-docosanoylsphinganine + CoA + H(+). It catalyses the reaction tetracosanoyl-CoA + sphinganine = N-tetracosanoylsphinganine + CoA + H(+). The enzyme catalyses hexacosanoyl-CoA + sphinganine = N-hexacosanoylsphinganine + CoA + H(+). The catalysed reaction is (15Z)-tetracosenoyl-CoA + sphinganine = N-(15Z-tetracosenoyl)-sphinganine + CoA + H(+). It carries out the reaction 2-hydroxytetracosanoyl-CoA + sphinganine = N-(2-hydroxytetracosanoyl)-sphinganine + CoA + H(+). It catalyses the reaction 2-hydroxydocosanoyl-CoA + sphinganine = N-(2-hydroxydocosanoyl)-sphinganine + CoA + H(+). The enzyme catalyses 2-hydroxytetracosenoyl-CoA + sphinganine = N-(2-hydroxytetracosenoyl)-sphinganine + CoA + H(+). The catalysed reaction is tetracosenoyl-CoA + sphinganine = an N-tetracosenoylsphinganine + CoA + H(+). It carries out the reaction hexacosenoyl-CoA + sphinganine = N-hexacosenoylsphinganine + CoA + H(+). It catalyses the reaction tetracosanoyl-CoA + sphing-4-enine = N-tetracosanoyl-sphing-4-enine + CoA + H(+). The enzyme catalyses tetracosenoyl-CoA + sphing-4-enine = N-(tetracosenoyl)-sphing-4-enine + CoA + H(+). The catalysed reaction is heptadecasphing-4-enine + tetracosanoyl-CoA = N-tetracosanoyl-heptadecasphing-4-enine + CoA + H(+). It carries out the reaction a fatty acyl-CoA + sphing-4-enine = an N-acylsphing-4-enine + CoA + H(+). It catalyses the reaction sphing-4-enine + hexadecanoyl-CoA = N-hexadecanoylsphing-4-enine + CoA + H(+). The enzyme catalyses sphing-4-enine + octadecanoyl-CoA = N-octadecanoylsphing-4-enine + CoA + H(+). The catalysed reaction is eicosanoyl-CoA + sphing-4-enine = N-eicosanoyl-sphing-4-enine + CoA + H(+). It carries out the reaction sphinganine + hexadecanoyl-CoA = N-hexadecanoylsphinganine + CoA + H(+). It catalyses the reaction sphinganine + octadecanoyl-CoA = N-(octadecanoyl)-sphinganine + CoA + H(+). The enzyme catalyses sphinganine + (9Z)-octadecenoyl-CoA = N-(9Z-octadecenoyl)-sphinganine + CoA + H(+). The catalysed reaction is eicosanoyl-CoA + sphinganine = N-eicosanoylsphinganine + CoA + H(+). It participates in lipid metabolism; sphingolipid metabolism. Its activity is regulated as follows. Ceramide synthase activity is inhibited by sphingosine-1-phosphate. Its function is as follows. Ceramide synthase that catalyzes the transfer of the acyl chain from acyl-CoA to a sphingoid base, with high selectivity toward very-long-chain fatty acyl-CoA (chain length C22-C27). N-acylates sphinganine and sphingosine bases to form dihydroceramides and ceramides in de novo synthesis and salvage pathways, respectively. Plays a non-redundant role in the synthesis of ceramides with very-long-chain fatty acids in kidney, liver and brain. Regulates the abundance of myelin-specific sphingolipids galactosylceramide and sulfatide that affects myelin sheath architecture and motor neuron functions. This is Ceramide synthase 2 from Homo sapiens (Human).